The following is a 304-amino-acid chain: Uricase (304 aa).

N-acetylalanine is present on A2. N6-acetyllysine; alternate occurs at positions 10 and 23. Residues K10 and K23 each carry the N6-succinyllysine; alternate modification. Catalysis depends on K23, which acts as the Charge relay system. Residues K27 and K36 each carry the N6-acetyllysine modification. A phosphoserine mark is found at S39 and S63. The Charge relay system role is filled by T68. Urate is bound by residues T68 and D69. Residues K118, K122, and K164 each carry the N6-acetyllysine modification. Position 170 (F170) interacts with urate. 2 positions are modified to N6-acetyllysine: K175 and K185. R187 contributes to the urate binding site. N6-acetyllysine; alternate occurs at positions 221 and 228. K221 and K228 each carry N6-succinyllysine; alternate. Residue S232 is modified to Phosphoserine. Urate is bound by residues V235, Q236, and N262. The active-site Charge relay system is H264. K278 carries the N6-acetyllysine modification. Residue Y289 is modified to Phosphotyrosine. A Microbody targeting signal motif is present at residues S302–L304.

The protein belongs to the uricase family.

The protein localises to the peroxisome. It catalyses the reaction urate + O2 + H2O = 5-hydroxyisourate + H2O2. Its pathway is purine metabolism; urate degradation; (S)-allantoin from urate: step 1/3. Functionally, catalyzes the oxidation of uric acid to 5-hydroxyisourate, which is further processed to form (S)-allantoin. In Canis lupus familiaris (Dog), this protein is Uricase (UOX).